The following is an 85-amino-acid chain: Large ribosomal subunit protein bL31B (85 aa).

Belongs to the bacterial ribosomal protein bL31 family. Type B subfamily. In terms of assembly, part of the 50S ribosomal subunit.

This is Large ribosomal subunit protein bL31B from Micrococcus luteus (strain ATCC 4698 / DSM 20030 / JCM 1464 / CCM 169 / CCUG 5858 / IAM 1056 / NBRC 3333 / NCIMB 9278 / NCTC 2665 / VKM Ac-2230) (Micrococcus lysodeikticus).